A 350-amino-acid polypeptide reads, in one-letter code: Putative deoxyribonuclease-2 (350 aa).

This sequence belongs to the DNase II family.

The chain is Putative deoxyribonuclease-2 from Burkholderia pseudomallei (strain 1710b).